We begin with the raw amino-acid sequence, 418 residues long: UDP-N-acetylglucosamine 1-carboxyvinyltransferase (418 aa).

Residue 22–23 (KN) participates in phosphoenolpyruvate binding. Arginine 91 contacts UDP-N-acetyl-alpha-D-glucosamine. Cysteine 115 (proton donor) is an active-site residue. A 2-(S-cysteinyl)pyruvic acid O-phosphothioketal modification is found at cysteine 115. UDP-N-acetyl-alpha-D-glucosamine contacts are provided by aspartate 305 and isoleucine 327.

It belongs to the EPSP synthase family. MurA subfamily.

The protein resides in the cytoplasm. It carries out the reaction phosphoenolpyruvate + UDP-N-acetyl-alpha-D-glucosamine = UDP-N-acetyl-3-O-(1-carboxyvinyl)-alpha-D-glucosamine + phosphate. Its pathway is cell wall biogenesis; peptidoglycan biosynthesis. In terms of biological role, cell wall formation. Adds enolpyruvyl to UDP-N-acetylglucosamine. In Aeromonas salmonicida (strain A449), this protein is UDP-N-acetylglucosamine 1-carboxyvinyltransferase.